A 102-amino-acid chain; its full sequence is Large ribosomal subunit protein bL21 (102 aa).

This sequence belongs to the bacterial ribosomal protein bL21 family. In terms of assembly, part of the 50S ribosomal subunit. Contacts protein L20.

This protein binds to 23S rRNA in the presence of protein L20. This is Large ribosomal subunit protein bL21 from Staphylococcus aureus.